The sequence spans 274 residues: NAD kinase (274 aa).

D61 functions as the Proton acceptor in the catalytic mechanism. NAD(+) contacts are provided by residues 61 to 62 (DG), K66, 134 to 135 (ND), K145, D164, and 175 to 180 (TAYSLS).

This sequence belongs to the NAD kinase family. Requires a divalent metal cation as cofactor.

It localises to the cytoplasm. It catalyses the reaction NAD(+) + ATP = ADP + NADP(+) + H(+). Functionally, involved in the regulation of the intracellular balance of NAD and NADP, and is a key enzyme in the biosynthesis of NADP. Catalyzes specifically the phosphorylation on 2'-hydroxyl of the adenosine moiety of NAD to yield NADP. This is NAD kinase from Clostridium tetani (strain Massachusetts / E88).